The sequence spans 328 residues: Cytochrome f (328 aa).

A signal peptide spans 1–44 (MRNPDTLGLWTKTMVALRRFTVLAIATVSVFLITDLGLPQAASA). Residues Tyr-45, Cys-66, Cys-69, and His-70 each contribute to the heme site. A helical transmembrane segment spans residues 296-313 (FLVLFLAGIMLSQILLVL).

This sequence belongs to the cytochrome f family. As to quaternary structure, the 4 large subunits of the cytochrome b6-f complex are cytochrome b6, subunit IV (17 kDa polypeptide, PetD), cytochrome f and the Rieske protein, while the 4 small subunits are PetG, PetL, PetM and PetN. The complex functions as a dimer. Requires heme as cofactor.

The protein localises to the cellular thylakoid membrane. Its function is as follows. Component of the cytochrome b6-f complex, which mediates electron transfer between photosystem II (PSII) and photosystem I (PSI), cyclic electron flow around PSI, and state transitions. The protein is Cytochrome f (petA) of Synechocystis sp. (strain ATCC 27184 / PCC 6803 / Kazusa).